We begin with the raw amino-acid sequence, 400 residues long: MPFVKDFKPQALGDTNLFKPIKIGNNELLHRAVIPPLTRMRAQHPGNIPNRDWAVEYYAQRAQRPGTLIITEGTFPSPQSGGYDNAPGIWSEEQIKEWTKIFKAIHENKSFAWVQLWVLGWAAFPDTLARDGLRYDSASDNVYMNAEQEEKAKKANNPQHSITKDEIKQYVKEYVQAAKNSIAAGADGVEIHSANGYLLNQFLDPHSNNRTDEYGGSIENRARFTLEVVDAVVDAIGPEKVGLRLSPYGVFNSMSGGAETGIVAQYAYVLGELERRAKAGKRLAFVHLVEPRVTNPFLTEGEGEYNGGSNKFAYSIWKGPIIRAGNFALHPEVVREEVKDPRTLIGYGRFFISNPDLVDRLEKGLPLNKYDRDTFYKMSAEGYIDYPTYEEALKLGWDKN.

Positions 38 and 115 each coordinate FMN. Substrate is bound by residues histidine 192 and asparagine 195. Tyrosine 197 acts as the Proton donor in catalysis. Positions 244 and 349 each coordinate FMN. Residue serine 353 is modified to Phosphoserine. A substrate-binding site is contributed by tyrosine 376. Serine 379 carries the post-translational modification Phosphoserine.

This sequence belongs to the NADH:flavin oxidoreductase/NADH oxidase family. As to quaternary structure, homodimer or heterodimer with OYE3. Requires FMN as cofactor.

It is found in the cytoplasm. The protein localises to the nucleus. Its subcellular location is the mitochondrion. The catalysed reaction is A + NADPH + H(+) = AH2 + NADP(+). Functionally, flavin-dependent enoate reductase that catalyzes the chemo- and stereoslective hydrogenation of electron-poor alkenes. The enzyme is reduced by NADPH, and oxygen, quinones, and alpha,beta-unsaturated aldehydes and ketones can act as electron acceptors to complete catalytic turnover. The physiological oxidant remains elusive. Has an antioxidant activity, reducing reactive oxygen species (ROS) levels when overexpressed. Formation of OYE2-OYE3 heterodimers contribute to the induction of programmed cell death upon oxidative stress. This is NADPH dehydrogenase 2 from Saccharomyces cerevisiae (strain ATCC 204508 / S288c) (Baker's yeast).